The following is a 324-amino-acid chain: Nucleotide-binding protein GbCGDNIH1_0395 (324 aa).

14–21 (GLSGAGKS) serves as a coordination point for ATP. 59–62 (DARS) contacts GTP. A disordered region spans residues 286 to 324 (ISDDAPQAGAARVSTDDRNGRPEEHGSAQAPDELSRTTS). Basic and acidic residues predominate over residues 299-311 (STDDRNGRPEEHG).

This sequence belongs to the RapZ-like family.

Displays ATPase and GTPase activities. The chain is Nucleotide-binding protein GbCGDNIH1_0395 from Granulibacter bethesdensis (strain ATCC BAA-1260 / CGDNIH1).